The primary structure comprises 197 residues: CASP-like protein 0U1 (197 aa).

Over 1–13 (MDDFDPTVTNSPK) the chain is Cytoplasmic. The chain crosses the membrane as a helical span at residues 14–34 (FRLIAVQCLFSITAFAAMLSQ). The Extracellular segment spans residues 35 to 63 (RHGLAGPDEMTLEECGPQACGYQKFSNFK). Residues 64–84 (FLIAVCIIYAVFSLVVMAAYL) traverse the membrane as a helical segment. Residues 85–99 (LQRVPPPVTELTAYT) lie on the Cytoplasmic side of the membrane. The chain crosses the membrane as a helical span at residues 100–120 (VMNVLLFAAFAMSATSCNITI). The Extracellular segment spans residues 121 to 135 (VDPVYPVCKRATSAK). Residues 136 to 156 (ASIAFAFFTWLAVCFSMLFTY) traverse the membrane as a helical segment. At 157-197 (KEWRDVDYHVPGSGAYEFVPGVTSGSSRSSYPPQASSSSYA) the chain is on the cytoplasmic side. Residues 178–197 (VTSGSSRSSYPPQASSSSYA) form a disordered region. Positions 180-197 (SGSSRSSYPPQASSSSYA) are enriched in low complexity.

The protein belongs to the Casparian strip membrane proteins (CASP) family. As to quaternary structure, homodimer and heterodimers.

It is found in the cell membrane. The chain is CASP-like protein 0U1 from Micromonas commoda (strain RCC299 / NOUM17 / CCMP2709) (Picoplanktonic green alga).